The primary structure comprises 1143 residues: Serine/threonine-protein kinase BRI1-like 2 (1143 aa).

An N-terminal signal peptide occupies residues 1 to 31; that stretch reads MTTSPIRVRIRTRIQISFIFLLTHLSQSSSS. Residues 32–756 are Extracellular-facing; the sequence is DQSSLKTDSL…GTRAASWANS (725 aa). The short motif at 68 to 75 is the Cys pair 1 element; sequence CQFSGVTC. LRR repeat units lie at residues 77 to 101, 102 to 125, 126 to 150, 151 to 175, 177 to 200, 203 to 227, 228 to 250, 251 to 275, 277 to 299, 300 to 324, 326 to 349, 351 to 373, 374 to 398, 399 to 422, 424 to 446, 447 to 470, 472 to 493, 494 to 518, 520 to 542, 570 to 594, 610 to 634, 635 to 660, 662 to 681, and 682 to 707; these read GGRV…AFTS, LDSL…LLLL, PLTL…FFSK, YSNL…LFLS, KKLQ…TIPL, CVSM…LINC, TNLK…SFGE, LKLL…IGDT, RSLQ…SLSS, CSWL…ILRS, GSLQ…ISAC, SLRI…LCPG, AASL…ISQC, SELR…IGNL, KLEQ…IGKL, QNLK…FFNC, NIEW…DFGI, LSRL…LGKC, TLVW…LGRQ, VGGL…KSCD, YQTI…IGEM, IALQ…QLKN, GVFD…SFSN, and LSFL…QLST. N-linked (GlcNAc...) asparagine glycosylation is found at Asn84 and Asn118. N-linked (GlcNAc...) asparagine glycosylation is found at Asn163, Asn188, Asn226, and Asn234. Asn288 and Asn312 each carry an N-linked (GlcNAc...) asparagine glycan. The N-linked (GlcNAc...) asparagine glycan is linked to Asn412. Asn469 carries N-linked (GlcNAc...) asparagine glycosylation. A glycan (N-linked (GlcNAc...) asparagine) is linked at Asn506. N-linked (GlcNAc...) asparagine glycosylation is present at Asn681. Residues 720–727 carry the Cys pair 2 motif; sequence CGVPLPEC. Residues 757–777 form a helical membrane-spanning segment; it reads IVLGVLISAASVCILIVWAIA. The Cytoplasmic segment spans residues 778-1143; sequence VRARRRDADD…NNSHSHSNSL (366 aa). Phosphothreonine is present on Thr835. Residues 838–1129 form the Protein kinase domain; it reads FSAASMIGHG…LQVVASLREL (292 aa). Residues 844–852 and Lys866 each bind ATP; that span reads IGHGGFGEV. Tyr911 carries the post-translational modification Phosphotyrosine. Asp966 functions as the Proton acceptor in the catalytic mechanism. Ser1001 carries the phosphoserine modification. Tyr1009 carries the phosphotyrosine modification.

It belongs to the protein kinase superfamily. Ser/Thr protein kinase family. As to quaternary structure, interacts with TTL3. As to expression, expressed in provascular and procambial sites throughout plant development. Expressed throughout globe- to heart-staged embryos. Then, it is restricted to procambial cells by the late torpedo stage, and this pattern persists throughout the duration of embryo development. After germination, it is expressed not only in procambial cells throughout the plant but also in all lateral organ primordia before the onset of vascularization.

It localises to the cell membrane. The enzyme catalyses L-seryl-[protein] + ATP = O-phospho-L-seryl-[protein] + ADP + H(+). The catalysed reaction is L-threonyl-[protein] + ATP = O-phospho-L-threonyl-[protein] + ADP + H(+). Its function is as follows. Receptor with a serine/threonine-protein kinase activity, which may transduce extracellular spatial and temporal signals into downstream cell differentiation responses in provascular and procambial cells. In contrast to BRI1, BRL1 and BRL3, it does not bind brassinolide. The sequence is that of Serine/threonine-protein kinase BRI1-like 2 from Arabidopsis thaliana (Mouse-ear cress).